Reading from the N-terminus, the 2336-residue chain is Genome polyprotein (2336 aa).

Residues 1-201 (MNTTDCFIAL…WKAKVQKRLK (201 aa)) enclose the Peptidase C28 domain. The Cytoplasmic portion of the chain corresponds to 1 to 1481 (MNTTDCFIAL…SFVKRAFKRL (1481 aa)). Residues Cys-51, His-148, and Asp-163 each act as for leader protease activity in the active site. Disordered regions lie at residues 197–218 (QKRL…QSGN) and 238–265 (QLGD…NTQN). Gly-202 is lipidated: N-myristoyl glycine; by host. Polar residues-rich tracts occupy residues 204-218 (GQSS…QSGN) and 238-251 (QLGD…SNEG). Positions 252 to 265 (STDTTSTHTTNTQN) are enriched in low complexity. The antigenic epitope stretch occupies residues 789–797 (ALLRAATYY). A Cell attachment site motif is present at residues 869-871 (RGD). One can recognise an SF3 helicase domain in the interval 1190-1354 (NVHIANLCKV…DGYKVNNKLD (165 aa)). Residue 1218 to 1225 (GKSGQGKS) coordinates ATP. Residues 1482–1502 (KENFEIVALCLTLLANIVIMI) lie within the membrane without spanning it. Residues 1503-2336 (RETRKRQQMV…NAVCGDAQSL (834 aa)) lie on the Cytoplasmic side of the membrane. The disordered stretch occupies residues 1556-1591 (PGHRASDDVNSEPARPVEEQPQAEGPYTGPLERQKP). O-(5'-phospho-RNA)-tyrosine occurs at positions 1582, 1605, and 1629. One can recognise a Peptidase C3 domain in the interval 1653-1849 (APPTDLQKMV…YCSCVSRSML (197 aa)). The active-site For protease 3C activity; Proton donor/acceptor is the His-1696. Active-site for protease 3C activity residues include Asp-1734 and Cys-1813. The Nuclear localization signal signature appears at 1879–1887 (MRKTKLAPT). In terms of domain architecture, RdRp catalytic spans 2097 to 2215 (KNVWDVDYSA…ASDYDLDFEA (119 aa)). Residue Asp-2201 is the For RdRp activity of the active site.

Belongs to the picornaviruses polyprotein family. Interacts with host ISG15. As to quaternary structure, interacts (via R-G-D motif) with host ITGAV/ITGB6. Interacts with host MAVS; this interaction inhibits binding of host TRAF3 to MAVS, thereby suppressing interferon-mediated responses. In terms of assembly, forms homooligomers. Homohexamer. Interacts with host VIM. Interacts with host BECN1. As to quaternary structure, interacts with host DCTN3. In terms of assembly, interacts with RNA-dependent RNA polymerase; this interaction allows 3B-1 to binds 2 polymerases and act as a primer. It also allows the recruitment of the RNA-dependent RNA polymerase to host membranes. Interacts with RNA-dependent RNA polymerase; this interaction allows 3B-2 to act as a primer. As to quaternary structure, interacts with RNA-dependent RNA polymerase; this interaction allows 3B-3 to act as a primer. In terms of assembly, interacts with 3B-1; this interaction allows 3B-1 to binds 2 polymerases and act as a primer. It also allows the recruitment of the RNA-dependent RNA polymerase to host membranes. Interacts with 3B-2; this interaction allows 3B-2 to act as a primer. Interacts with 3B-3; this interaction allows 3B-3 to act as a primer. In terms of processing, removes six residues from its own C-terminus, generating sLb(pro). Post-translationally, specific enzymatic cleavages in vivo by the viral proteases yield a variety of precursors and mature proteins. The polyprotein seems to be cotranslationally cleaved at the 2A/2B junction by a ribosomal skip from one codon to the next without formation of a peptide bond. This process would release the L-P1-2A peptide from the translational complex. During virion maturation, immature virions are rendered infectious following cleavage of VP0 into VP4 and VP2. This maturation seems to be an autocatalytic event triggered by the presence of RNA in the capsid and is followed by a conformational change of the particle. In terms of processing, myristoylation is required during RNA encapsidation and formation of the mature virus particle. Post-translationally, uridylylated by the polymerase and covalently linked to the 5'-end of genomic RNA. These uridylylated forms act as a nucleotide-peptide primer for the polymerase.

It is found in the host nucleus. Its subcellular location is the host cytoplasm. The protein localises to the virion. It localises to the host endoplasmic reticulum membrane. The protein resides in the host cytoplasmic vesicle membrane. It catalyses the reaction Autocatalytically cleaves itself from the polyprotein of the foot-and-mouth disease virus by hydrolysis of a Lys-|-Gly bond, but then cleaves host cell initiation factor eIF-4G at bonds -Gly-|-Arg- and -Lys-|-Arg-.. The enzyme catalyses a ribonucleoside 5'-triphosphate + H2O = a ribonucleoside 5'-diphosphate + phosphate + H(+). It carries out the reaction RNA(n) + a ribonucleoside 5'-triphosphate = RNA(n+1) + diphosphate. The catalysed reaction is Selective cleavage of Gln-|-Gly bond in the poliovirus polyprotein. In other picornavirus reactions Glu may be substituted for Gln, and Ser or Thr for Gly.. Functionally, autocatalytically cleaves itself from the polyprotein at the L/VP0 junction. Also cleaves the host translation initiation factors EIF4G1 and EIF4G3, in order to shut off the capped cellular mRNA transcription. Plays a role in counteracting host innate antiviral response using diverse mechanisms. Possesses a deubiquitinase activity acting on both 'Lys-48' and 'Lys-63'-linked polyubiquitin chains. In turn, inhibits the ubiquitination and subsequent activation of key signaling molecules of type I IFN response such as host RIGI, TBK1, TRAF3 and TRAF6. Inhibits host NF-kappa-B activity by inducing a decrease in RELA mRNA levels. Cleaves a peptide bond in the C-terminus of host ISG15, resulting in the damaging of this modifier that can no longer be attached to target proteins. Also cleaves host G3BP1 and G3BP2 in order to inhibit cytoplasmic stress granules assembly. In terms of biological role, lies on the inner surface of the capsid shell. After binding to the host receptor, the capsid undergoes conformational changes. Capsid protein VP4 is released, capsid protein VP1 N-terminus is externalized, and together, they shape a pore in the host membrane through which the viral genome is translocated into the host cell cytoplasm. After genome has been released, the channel shrinks. Its function is as follows. Forms an icosahedral capsid of pseudo T=3 symmetry with capsid proteins VP1 and VP3. The capsid is composed of 60 copies of each capsid protein organized in the form of twelve pentamers and encloses the viral positive strand RNA genome. Upon acidifcation in the endosome, dissociates into pentamers. Forms an icosahedral capsid of pseudo T=3 symmetry with capsid proteins VP0 and VP3. The capsid is composed of 60 copies of each capsid protein organized in the form of twelve pentamers and encloses the viral positive strand RNA genome. Upon acidifcation in the endosome, dissociates into pentamers. Functionally, forms an icosahedral capsid of pseudo T=3 symmetry with capsid proteins VP2 and VP3. The capsid is composed of 60 copies of each capsid protein organized in the form of twelve pentamers and encloses the viral positive strand RNA genome. Mediates cell entry by attachment to an integrin receptor, usually host ITGAV/ITGB6. In addition, targets host MAVS to suppress type I IFN pathway. Upon acidifcation in the endosome, dissociates into pentamers. In terms of biological role, mediates self-processing of the polyprotein by a translational effect termed 'ribosome skipping'. Mechanistically, 2A-mediated cleavage occurs between the C-terminal glycine and the proline of the downstream protein 2B. In the case of foot-and-mouth disease virus, the 2A oligopeptide is post-translationally 'trimmed' from the C-terminus of the upstream protein 1D by 3C proteinase. Its function is as follows. Plays an essential role in the virus replication cycle by acting as a viroporin. Creates a pore in the host endoplasmic reticulum and as a consequence releases Ca2+ in the cytoplasm of infected cell. In turn, high levels of cytoplasmic calcium may trigger membrane trafficking and transport of viral ER-associated proteins to viroplasms, sites of viral genome replication. Associates with and induces structural rearrangements of intracellular membranes. Triggers host autophagy by interacting with host BECN1 and thereby promotes viral replication. Participates in viral replication and interacts with host DHX9. Displays RNA-binding, nucleotide binding and NTPase activities. May play a role in virion morphogenesis and viral RNA encapsidation by interacting with the capsid protein VP3. Functionally, plays important roles in virus replication, virulence and host range. Cooperates with host DDX56 to inhibit IRF3 nuclear translocation and subsequent type I interferon production. In terms of biological role, covalently linked to the 5'-end of both the positive-strand and negative-strand genomic RNAs. Acts as a genome-linked replication primer. Its function is as follows. Cysteine protease that generates mature viral proteins from the precursor polyprotein. In addition to its proteolytic activity, binds to viral RNA and thus influences viral genome replication. RNA and substrate bind cooperatively to the protease. RNA-directed RNA polymerase 3D-POL replicates genomic and antigenomic RNA by recognizing replications specific signals. Covalently attaches UMP to a tyrosine of VPg, which is used to prime RNA synthesis. The positive stranded RNA genome is first replicated at virus induced membranous vesicles, creating a dsRNA genomic replication form. This dsRNA is then used as template to synthesize positive stranded RNA genomes. ss(+)RNA genomes are either translated, replicated or encapsidated. This is Genome polyprotein from Foot-and-mouth disease virus (isolate -/Azerbaijan/A22-550/1965 serotype A) (FMDV).